The following is a 300-amino-acid chain: uncharacterized protein (300 aa).

10 helical membrane-spanning segments follow: residues 4–24 (IIII…WIAM), 31–51 (IPPF…LIIL), 68–88 (FQIF…LYGG), 95–115 (ISSI…HFYL), 120–140 (NFIQ…VLLI), 146–166 (CFFQ…HAVI), 177–197 (VSVI…LSII), 214–234 (ILAV…SYFY), 242–262 (FYAS…EIYI), and 272–292 (LWFI…INFF). 2 EamA domains span residues 15-139 (ITWG…FVLL) and 161-287 (LSHA…LTLI).

Belongs to the EamA transporter family.

It is found in the cell membrane. This is an uncharacterized protein from Buchnera aphidicola subsp. Schizaphis graminum (strain Sg).